Reading from the N-terminus, the 331-residue chain is MKKPVVIGLAIAAIVTVIAGGTWWYQSRQDDGLTLYGNVDIRTVNISFRVGGRLASLNVDEGDTIKAGQVLGELDHAPYENALMQAKAGVSVAQAQYDLMLAGYRDEEIAQAAAAVRQAQAAYDYAQNFYNRQQGLWKSRTISANDLENARSSRDQAQATLKSAQDKLSQYRTGNREQDIAQAKASLEQAKAQLAQAQLDLQDTTLIAPSNGTLLTRAVEPGSMLNAGSTVLTLSLTRPVWVRAYVDERNLSQTQPGREILLYTDGRPDKPYHGKIGFVSPTAEFTPKTVETPDLRTDLVYRLRIIVTDADDALRQGMPVTVKFNDEARHE.

Residues 1–19 (MKKPVVIGLAIAAIVTVIA) form the signal peptide. A coiled-coil region spans residues 107 to 208 (EEIAQAAAAV…LDLQDTTLIA (102 aa)).

The protein belongs to the UPF0194 family.

It is found in the periplasm. This is UPF0194 membrane protein YbhG from Salmonella arizonae (strain ATCC BAA-731 / CDC346-86 / RSK2980).